The primary structure comprises 206 residues: Putative archaetidylserine decarboxylase proenzyme (206 aa).

The active-site Schiff-base intermediate with substrate; via pyruvic acid is the S172. S172 carries the post-translational modification Pyruvic acid (Ser); by autocatalysis.

It belongs to the phosphatidylserine decarboxylase family. PSD-A subfamily. Heterodimer of a large membrane-associated beta subunit and a small pyruvoyl-containing alpha subunit. Pyruvate is required as a cofactor. Post-translationally, is synthesized initially as an inactive proenzyme. Formation of the active enzyme involves a self-maturation process in which the active site pyruvoyl group is generated from an internal serine residue via an autocatalytic post-translational modification. Two non-identical subunits are generated from the proenzyme in this reaction, and the pyruvate is formed at the N-terminus of the alpha chain, which is derived from the carboxyl end of the proenzyme. The post-translation cleavage follows an unusual pathway, termed non-hydrolytic serinolysis, in which the side chain hydroxyl group of the serine supplies its oxygen atom to form the C-terminus of the beta chain, while the remainder of the serine residue undergoes an oxidative deamination to produce ammonia and the pyruvoyl prosthetic group on the alpha chain.

The protein resides in the cell membrane. The enzyme catalyses archaetidylserine + H(+) = archaetidylethanolamine + CO2. Its function is as follows. Catalyzes the formation of archaetidylethanolamine (PtdEtn) from archaetidylserine (PtdSer). This is Putative archaetidylserine decarboxylase proenzyme from Methanocaldococcus jannaschii (strain ATCC 43067 / DSM 2661 / JAL-1 / JCM 10045 / NBRC 100440) (Methanococcus jannaschii).